A 409-amino-acid polypeptide reads, in one-letter code: LysM domain-containing GPI-anchored protein LYP6 (409 aa).

The signal sequence occupies residues 1–27; that stretch reads MAGWPAAEAAGALVVAILAAAAGGAAG. 4 cysteine pairs are disulfide-bonded: cysteine 34–cysteine 100, cysteine 40–cysteine 166, cysteine 98–cysteine 164, and cysteine 100–cysteine 166. The LysM 1 domain maps to 110-160; sequence VRYSARPADTLASVADVVFAGLASADQIRTANGLSAEDPDAPLDAGATLVV. Residue asparagine 168 is glycosylated (N-linked (GlcNAc...) asparagine). The 44-residue stretch at 179–222 folds into the LysM 2 domain; sequence LSYVVRVGDTVQSIAATHATTVTDISNVNAMGSPIVAPGDILAI. Cystine bridges form between cysteine 227–cysteine 259 and cysteine 254–cysteine 282. N-linked (GlcNAc...) asparagine glycosylation is present at asparagine 244. 3 N-linked (GlcNAc...) asparagine glycosylation sites follow: asparagine 291, asparagine 302, and asparagine 313. The tract at residues 353–387 is disordered; sequence SPAPGAGEAGGDIPGFPGSSNVSPANGPSGSVSQA. A compositionally biased stretch (polar residues) spans 370-387; that stretch reads GSSNVSPANGPSGSVSQA. Alanine 387 is lipidated: GPI-anchor amidated alanine. Positions 388 to 409 are cleaved as a propeptide — removed in mature form; the sequence is ASVNRPHQIVALILSVALYFQM.

As to quaternary structure, interacts with LYP4. Interacts with CERK1. Interacts with CEBIP. In terms of tissue distribution, expressed in roots and leaves.

It localises to the cell membrane. In terms of biological role, functions in innate immunity. Functions as a pattern recognition receptor (PRR), sensing bacterial peptidoglycan (PGN) and fungal chitin at the cell surface. Involved in resistance against the bacterial pathogen Xanthomonas oryzae pv. oryzae (Xoo) and the fungal pathogen Magnaporthe oryzae. Binds PGN and fungal chitin in vitro. Involved in microbe-associated molecular patterns (MAMPs) perception and participates in the activation of defense genes against the bacterial pathogen Xanthomonas oryzae pv. oryzicola (Xoc) or the fungal pathogen Magnaporthe oryzae. The chain is LysM domain-containing GPI-anchored protein LYP6 from Oryza sativa subsp. japonica (Rice).